The primary structure comprises 172 residues: Translationally-controlled tumor protein homolog (172 aa).

Residues 1-172 (MIIYRDCISQ…FKDGLEMEKC (172 aa)) form the TCTP domain.

Belongs to the TCTP family. As to expression, expressed by the venom gland.

It is found in the secreted. In terms of biological role, venom protein that causes edema, enhances vascular permeability and is likely related to the inflammatory activity of the venom. The sequence is that of Translationally-controlled tumor protein homolog from Crotalus adamanteus (Eastern diamondback rattlesnake).